A 98-amino-acid polypeptide reads, in one-letter code: NADH-ubiquinone oxidoreductase chain 4L (98 aa).

3 consecutive transmembrane segments (helical) span residues 2–22 (TPIF…TLIF), 29–49 (SLLC…LIIL), and 61–81 (ILLL…LVMV).

It belongs to the complex I subunit 4L family. Core subunit of respiratory chain NADH dehydrogenase (Complex I) which is composed of 45 different subunits.

The protein resides in the mitochondrion inner membrane. The catalysed reaction is a ubiquinone + NADH + 5 H(+)(in) = a ubiquinol + NAD(+) + 4 H(+)(out). Functionally, core subunit of the mitochondrial membrane respiratory chain NADH dehydrogenase (Complex I) which catalyzes electron transfer from NADH through the respiratory chain, using ubiquinone as an electron acceptor. Part of the enzyme membrane arm which is embedded in the lipid bilayer and involved in proton translocation. The sequence is that of NADH-ubiquinone oxidoreductase chain 4L (MT-ND4L) from Avahi cleesei (Cleese's woolly lemur).